The following is a 123-amino-acid chain: Small ribosomal subunit protein uS12 (123 aa).

The residue at position 89 (aspartate 89) is a 3-methylthioaspartic acid.

The protein belongs to the universal ribosomal protein uS12 family. Part of the 30S ribosomal subunit. Contacts proteins S8 and S17. May interact with IF1 in the 30S initiation complex.

Its function is as follows. With S4 and S5 plays an important role in translational accuracy. Interacts with and stabilizes bases of the 16S rRNA that are involved in tRNA selection in the A site and with the mRNA backbone. Located at the interface of the 30S and 50S subunits, it traverses the body of the 30S subunit contacting proteins on the other side and probably holding the rRNA structure together. The combined cluster of proteins S8, S12 and S17 appears to hold together the shoulder and platform of the 30S subunit. This is Small ribosomal subunit protein uS12 from Phenylobacterium zucineum (strain HLK1).